Consider the following 374-residue polypeptide: Methionine import ATP-binding protein MetN 2 (374 aa).

The segment at 1–22 is disordered; that stretch reads MSVATLQRKLPEAAPRRAGQTE. Residues 32-271 enclose the ABC transporter domain; the sequence is VRFIGLGKTY…PQHEVSKTLL (240 aa). 68–75 lines the ATP pocket; the sequence is GRSGAGKS.

It belongs to the ABC transporter superfamily. Methionine importer (TC 3.A.1.24) family. In terms of assembly, the complex is composed of two ATP-binding proteins (MetN), two transmembrane proteins (MetI) and a solute-binding protein (MetQ).

The protein resides in the cell inner membrane. The catalysed reaction is L-methionine(out) + ATP + H2O = L-methionine(in) + ADP + phosphate + H(+). The enzyme catalyses D-methionine(out) + ATP + H2O = D-methionine(in) + ADP + phosphate + H(+). Part of the ABC transporter complex MetNIQ involved in methionine import. Responsible for energy coupling to the transport system. The sequence is that of Methionine import ATP-binding protein MetN 2 from Pseudomonas fluorescens (strain ATCC BAA-477 / NRRL B-23932 / Pf-5).